We begin with the raw amino-acid sequence, 366 residues long: Glutamate 5-kinase (366 aa).

Lysine 17 provides a ligand contact to ATP. Substrate contacts are provided by serine 57, aspartate 144, and asparagine 156. Residues 176 to 177 (SD) and 216 to 222 (TGGMASK) each bind ATP. Residues 278 to 352 (RGALVLDDGA…GRSTTELPDT (75 aa)) enclose the PUA domain.

It belongs to the glutamate 5-kinase family.

It is found in the cytoplasm. It carries out the reaction L-glutamate + ATP = L-glutamyl 5-phosphate + ADP. The protein operates within amino-acid biosynthesis; L-proline biosynthesis; L-glutamate 5-semialdehyde from L-glutamate: step 1/2. In terms of biological role, catalyzes the transfer of a phosphate group to glutamate to form L-glutamate 5-phosphate. The polypeptide is Glutamate 5-kinase (Nocardia farcinica (strain IFM 10152)).